A 530-amino-acid chain; its full sequence is Membrane-associated transporter protein (530 aa).

Topologically, residues 1–45 are cytoplasmic; it reads MSGSNGPTDTHTYQSLAEDCPFGSVEQPKRSTGRLVMHSMAMFGR. A helical membrane pass occupies residues 46–66; that stretch reads EFCYAVEAAYVTPVLLSVGLP. Topologically, residues 67–68 are extracellular; that stretch reads KS. A helical transmembrane segment spans residues 69 to 89; sequence LYSMVWLLSPILGFLLQPVVG. Over 90 to 105 the chain is Cytoplasmic; sequence SASDHCRARWGRRRPY. Residues 106 to 126 traverse the membrane as a helical segment; it reads ILTLAIMMLLGMALYLNGDAV. Residues 127-138 are Extracellular-facing; the sequence is VSALVANPRQKL. The helical transmembrane segment at 139–159 threads the bilayer; sequence IWAISITMVGVVLFDFSADFI. Topologically, residues 160–184 are cytoplasmic; it reads DGPIKAYLFDVCSHQDKEKGLHYHA. A helical transmembrane segment spans residues 185–205; it reads LFTGFGGALGYILGAIDWVHL. At 206–216 the chain is on the extracellular side; that stretch reads DLGRLLGTEFQ. Residues 217-237 traverse the membrane as a helical segment; it reads VMFFFSALVLILCFITHLCSI. The Cytoplasmic segment spans residues 238–318; the sequence is PEAPLRDAAT…ALVNMPSHYR (81 aa). The disordered stretch occupies residues 275 to 299; that stretch reads KNGGADTEQPVQEWKNKKPSGQSQR. The chain crosses the membrane as a helical span at residues 319–339; the sequence is CLCVSHLIGWTAFLSNMLFFT. The Extracellular segment spans residues 340 to 366; sequence DFMGQIVYHGDPYGAHNSTEFLIYERG. N-linked (GlcNAc...) asparagine glycosylation is present at N356. Residues 367 to 387 traverse the membrane as a helical segment; the sequence is VEVGCWGLCINSVFSSVYSYF. The Cytoplasmic segment spans residues 388–398; that stretch reads QKAMVSYIGLK. A helical membrane pass occupies residues 399–419; it reads GLYFMGYLLFGLGTGFIGLFP. Over 420 to 425 the chain is Extracellular; sequence NVYSTL. Residues 426–446 form a helical membrane-spanning segment; it reads VLCSMFGVMSSTLYTVPFNLI. Residues 447-477 are Cytoplasmic-facing; it reads AEYHREEEKEKGQEAPGGPDNQGRGKGVDCA. A helical membrane pass occupies residues 478-498; that stretch reads ALTCMVQLAQILVGGGLGFLV. At 499–504 the chain is on the extracellular side; sequence NMAGSV. Residues 505–525 form a helical membrane-spanning segment; that stretch reads VVVVITASAVSLIGCCFVALF. The Cytoplasmic segment spans residues 526-530; sequence VRYVD.

It belongs to the glycoside-pentoside-hexuronide (GPH) cation symporter transporter (TC 2.A.2) family. As to quaternary structure, interacts with TYRP1. In terms of tissue distribution, mainly expressed in eyeballs and skin melanocytes. Also detected in kidney, colon, gall bladder and pancreas.

The protein resides in the melanosome membrane. The enzyme catalyses sucrose(out) + H(+)(out) = sucrose(in) + H(+)(in). It carries out the reaction D-glucose(out) + H(+)(out) = D-glucose(in) + H(+)(in). Proton-associated glucose and sucrose transporter. May be able to transport also fructose. Expressed at a late melanosome maturation stage where functions as a proton/glucose exporter which increase lumenal pH by decreasing glycolysis. Regulates melanogenesis by maintaining melanosome neutralization that is initially initiated by transient OCA2 and required for a proper function of the tyrosinase TYR. The protein is Membrane-associated transporter protein (Slc45a2) of Mus musculus (Mouse).